A 138-amino-acid chain; its full sequence is Large-conductance mechanosensitive channel (138 aa).

3 helical membrane-spanning segments follow: residues 15–35 (VDLAIGVIIGGAFGGLVNSIV), 38–58 (IIMPIIGLITGGIDFSNMFIQ), and 80–100 (GNFITLLINFMIIAWVLFLVV).

Belongs to the MscL family. In terms of assembly, homopentamer.

It localises to the cell inner membrane. Channel that opens in response to stretch forces in the membrane lipid bilayer. May participate in the regulation of osmotic pressure changes within the cell. This chain is Large-conductance mechanosensitive channel, found in Brucella ovis (strain ATCC 25840 / 63/290 / NCTC 10512).